We begin with the raw amino-acid sequence, 429 residues long: Protein ORF66 (429 aa).

It belongs to the herpesviridae UL49 family. As to quaternary structure, interacts with ORF34.

The protein resides in the host nucleus. The protein localises to the host cytoplasm. In terms of biological role, participates in the expression of late viral mRNAs. In Homo sapiens (Human), this protein is Protein ORF66 (ORF66).